The chain runs to 116 residues: Large ribosomal subunit protein bL17 (116 aa).

This sequence belongs to the bacterial ribosomal protein bL17 family. As to quaternary structure, part of the 50S ribosomal subunit. Contacts protein L32.

This chain is Large ribosomal subunit protein bL17, found in Prochlorococcus marinus (strain MIT 9211).